A 309-amino-acid chain; its full sequence is MTKTFIFGHKNPDTDAISSALIMADFEQQTGNTEAKAYRLGEISAETQFALDYFNVEAPELLNEDLKGQDVILVDHNEFQQSADTISNATIKHVIDHHRISNFETAGPLYYRAEPVGCSATILYKMYKERGFEIKPEIAGLMISAIISDSLLFKSPTCTKEDVDAAQALKDIANVDLEAYGLEMLKAGASTTDKSAETLVNMDAKSFNMGDYVTRIAQVNTVDIDEVLDRKEEFEKVMLEMSANEKYDLFVLVVTDIINSDSKILVVGAEKDKVGEAFKVQLDDGMAFLSGVVSRKKQVVPQITEVLTQ.

Mn(2+)-binding residues include His-9, Asp-13, Asp-15, Asp-75, His-97, and Asp-149.

Belongs to the PPase class C family. Mn(2+) serves as cofactor.

The protein resides in the cytoplasm. It catalyses the reaction diphosphate + H2O = 2 phosphate + H(+). This chain is Probable manganese-dependent inorganic pyrophosphatase, found in Staphylococcus epidermidis (strain ATCC 12228 / FDA PCI 1200).